Reading from the N-terminus, the 117-residue chain is Large ribosomal subunit protein bL19 (117 aa).

It belongs to the bacterial ribosomal protein bL19 family.

Its function is as follows. This protein is located at the 30S-50S ribosomal subunit interface and may play a role in the structure and function of the aminoacyl-tRNA binding site. This Rhodopirellula baltica (strain DSM 10527 / NCIMB 13988 / SH1) protein is Large ribosomal subunit protein bL19.